Consider the following 703-residue polypeptide: Harmonin-binding protein USHBP1 (703 aa).

The span at 1–15 (MSARATRPRSRRGRH) shows a compositional bias: basic residues. Disordered stretches follow at residues 1–113 (MSAR…PPGN) and 138–172 (HQPP…CQRE). Residues 189-227 (SREDELVRTQASLEAIRAEKETLQKEVQELQDSLLRLEP) are a coiled coil. The interval 228 to 256 (CPHLSHNQAGGSGSGSSSSEADREPWETQ) is disordered. Positions 289 to 309 (EMHIMEAQMEQLRGSIEKLKC) form a coiled coil. The disordered stretch occupies residues 396–416 (MDAGAQQNPQPSPEGSSVDKP). Residues 400–410 (AQQNPQPSPEG) are compositionally biased toward polar residues. Positions 476-513 (RLEKTQIQQDLVAAREALADLMLRLQLVRREKRGLELR) form a coiled coil. The segment at 540–583 (AGGANSSGGHSSGGGSSGDEEEWYQGLPAVPGGTSGIDGGQVGR) is disordered. Positions 572-581 (GTSGIDGGQV) are enriched in gly residues. The stretch at 596–681 (ASLTRTLDLQ…QAEEVAVLEA (86 aa)) forms a coiled coil.

The protein belongs to the MCC family. Interacts via its C-terminus with the first PDZ domain of USH1C. In terms of tissue distribution, highest level of expression in heart, and moderate to low expression in skeletal muscle, kidney, liver, small intestine, placenta and lung.

The sequence is that of Harmonin-binding protein USHBP1 from Homo sapiens (Human).